A 210-amino-acid chain; its full sequence is MTNYKIDFSKGLVPAILQDNQTKQVLMLGYMNQEAFDKTIEDGVVCFYSRSKQRLWTKGETSGHTQRVKDIHVDCDNDTILIDVIPNGPTCHTGSQSCFNTEVPFSVQTLAQTVQDSAQSNNEKSYTKYLLTEGIEKITKKYGEEAFEVVIEAIKGDKKAFVSEVADELYHLFVLMHALGVDFSEIEAELARRHHKRNNFKGERQNIEQW.

Positions 1–106 (MTNYKIDFSK…SCFNTEVPFS (106 aa)) are phosphoribosyl-AMP cyclohydrolase. The interval 107–210 (VQTLAQTVQD…KGERQNIEQW (104 aa)) is phosphoribosyl-ATP pyrophosphohydrolase.

This sequence in the N-terminal section; belongs to the PRA-CH family. In the C-terminal section; belongs to the PRA-PH family.

Its subcellular location is the cytoplasm. It catalyses the reaction 1-(5-phospho-beta-D-ribosyl)-ATP + H2O = 1-(5-phospho-beta-D-ribosyl)-5'-AMP + diphosphate + H(+). The enzyme catalyses 1-(5-phospho-beta-D-ribosyl)-5'-AMP + H2O = 1-(5-phospho-beta-D-ribosyl)-5-[(5-phospho-beta-D-ribosylamino)methylideneamino]imidazole-4-carboxamide. It participates in amino-acid biosynthesis; L-histidine biosynthesis; L-histidine from 5-phospho-alpha-D-ribose 1-diphosphate: step 2/9. The protein operates within amino-acid biosynthesis; L-histidine biosynthesis; L-histidine from 5-phospho-alpha-D-ribose 1-diphosphate: step 3/9. This chain is Histidine biosynthesis bifunctional protein HisIE (hisI), found in Staphylococcus aureus (strain COL).